A 687-amino-acid chain; its full sequence is POZ-, AT hook-, and zinc finger-containing protein 1 (687 aa).

One can recognise a BTB domain in the interval 41–130 (CDVLLRVGDE…AYTSRIVVRL (90 aa)). Lys-112 is covalently cross-linked (Glycyl lysine isopeptide (Lys-Gly) (interchain with G-Cter in SUMO2)). Residues 250-260 (PFPSVASSAPP) show a composition bias toward low complexity. Residues 250–278 (PFPSVASSAPPLTGKRGRGRPRKANLLDS) form a disordered region. Positions 264–276 (KRGRGRPRKANLL) form a DNA-binding region, a.T hook. Lys-272 participates in a covalent cross-link: Glycyl lysine isopeptide (Lys-Gly) (interchain with G-Cter in SUMO2). Ser-282 carries the phosphoserine modification. The C2H2-type 1 zinc-finger motif lies at 292-314 (LPCGLCGKVFTDANRLRQHEAQH). The segment at 332–351 (GENGLPISEDPDGPRKRSRT) is disordered. 5 C2H2-type zinc fingers span residues 355-377 (VACEICGKIFRDVYHLNRHKLSH), 383-405 (YSCPVCGLRFKRKDRMSYHVRSH), 413-436 (YICQSCGKGFSRPDHLNGHIKQVH), 442-464 (HKCQTCNASFATRDRLRSHLACH), and 495-518 (NFCSICNRGFSSASYLKVHVKTHH). The segment covering 549–558 (EGQKCSHQDP) has biased composition (basic and acidic residues). The segment at 549 to 603 (EGQKCSHQDPIESSDSYGDLSDASDLKTPEKQSANGSFSCDMAVPKNKMESDGEK) is disordered. Residues 605-628 (YPCPECGSFFRSKSYLNKHIQKVH) form a C2H2-type 7 zinc finger.

This sequence belongs to the krueppel C2H2-type zinc-finger protein family. As to quaternary structure, homodimer. Interacts with RNF4. Interacts (via C-terminus) with TP53; this interaction inhibits TP53 ability to activate transcription. As to expression, ubiquitous.

The protein localises to the nucleus. Functionally, transcriptional regulator that plays a role in many biological processes such as embryogenesis, senescence, T-cell development or neurogenesis. Interacts with the TP53 protein to control genes that are important in proliferation and in the DNA-damage response. Mechanistically, the interaction inhibits the DNA binding and transcriptional activity of TP53/p53. Part of the transcriptional network modulating regulatory T-cell development and controls the generation of the regulatory T-cell pool under homeostatic conditions. (Microbial infection) Plays a positive role in viral cDNA synthesis. In Homo sapiens (Human), this protein is POZ-, AT hook-, and zinc finger-containing protein 1 (PATZ1).